Here is a 478-residue protein sequence, read N- to C-terminus: Argininosuccinate lyase (478 aa).

The protein belongs to the lyase 1 family. Argininosuccinate lyase subfamily.

It localises to the cytoplasm. The catalysed reaction is 2-(N(omega)-L-arginino)succinate = fumarate + L-arginine. It functions in the pathway amino-acid biosynthesis; L-arginine biosynthesis; L-arginine from L-ornithine and carbamoyl phosphate: step 3/3. The sequence is that of Argininosuccinate lyase from Leptospira biflexa serovar Patoc (strain Patoc 1 / Ames).